The sequence spans 304 residues: MNMTTYNLTHLKQLEAESIHIIREVAAEFDNPVMLYSIGKDSAVMLHLALKAFYPGKPPFPLLHVDTTWKFRDMISFRDHVAEKFGLDLIVHINEEGVKQGVGPFTHGSAKHTDIMKTQSLKQALNKYKFDAAFGGARRDEEKSRAKERVYSFRDEHHRWDPKNQRPELWNIYNGKVNKGESIRVFPLSNWTELDIWQYIYLENIDIVPLYYAAVRPVVERDGTLIMVDDDRMPLKEGEKPMMKSVRFRTLGCYPLTGAIESEANTLPDIIQEMLLATSSERQGRVIDHDSAGSMEQKKREGYF.

It belongs to the PAPS reductase family. CysD subfamily. Heterodimer composed of CysD, the smaller subunit, and CysN.

It carries out the reaction sulfate + ATP + H(+) = adenosine 5'-phosphosulfate + diphosphate. Its pathway is sulfur metabolism; hydrogen sulfide biosynthesis; sulfite from sulfate: step 1/3. Functionally, with CysN forms the ATP sulfurylase (ATPS) that catalyzes the adenylation of sulfate producing adenosine 5'-phosphosulfate (APS) and diphosphate, the first enzymatic step in sulfur assimilation pathway. APS synthesis involves the formation of a high-energy phosphoric-sulfuric acid anhydride bond driven by GTP hydrolysis by CysN coupled to ATP hydrolysis by CysD. In Marinobacter nauticus (strain ATCC 700491 / DSM 11845 / VT8) (Marinobacter aquaeolei), this protein is Sulfate adenylyltransferase subunit 2 2.